Consider the following 344-residue polypeptide: L-threonine 3-dehydrogenase (344 aa).

Cys-42 provides a ligand contact to Zn(2+). Catalysis depends on charge relay system residues Thr-44 and His-47. Zn(2+) is bound by residues His-67, Glu-68, Cys-97, Cys-100, Cys-103, and Cys-111. NAD(+) is bound by residues Ile-179, Asp-199, Arg-204, 266 to 268 (LGI), and 290 to 291 (IY).

It belongs to the zinc-containing alcohol dehydrogenase family. Homotetramer. The cofactor is Zn(2+).

The protein localises to the cytoplasm. The enzyme catalyses L-threonine + NAD(+) = (2S)-2-amino-3-oxobutanoate + NADH + H(+). Its pathway is amino-acid degradation; L-threonine degradation via oxydo-reductase pathway; glycine from L-threonine: step 1/2. Its function is as follows. Catalyzes the NAD(+)-dependent oxidation of L-threonine to 2-amino-3-ketobutyrate. This Chelativorans sp. (strain BNC1) protein is L-threonine 3-dehydrogenase.